Here is a 405-residue protein sequence, read N- to C-terminus: L-carnitine CoA-transferase (405 aa).

CoA is bound by residues Lys97 and Arg104. The active-site Nucleophile is the Asp169.

The protein belongs to the CoA-transferase III family. CaiB subfamily. In terms of assembly, homodimer.

The protein resides in the cytoplasm. The enzyme catalyses crotonobetainyl-CoA + (R)-carnitine = crotonobetaine + (R)-carnitinyl-CoA. It carries out the reaction 4-(trimethylamino)butanoyl-CoA + (R)-carnitine = (R)-carnitinyl-CoA + 4-(trimethylamino)butanoate. Its pathway is amine and polyamine metabolism; carnitine metabolism. Its function is as follows. Catalyzes the reversible transfer of the CoA moiety from gamma-butyrobetainyl-CoA to L-carnitine to generate L-carnitinyl-CoA and gamma-butyrobetaine. Is also able to catalyze the reversible transfer of the CoA moiety from gamma-butyrobetainyl-CoA or L-carnitinyl-CoA to crotonobetaine to generate crotonobetainyl-CoA. The chain is L-carnitine CoA-transferase from Escherichia coli (strain K12 / MC4100 / BW2952).